We begin with the raw amino-acid sequence, 98 residues long: Small ribosomal subunit protein bS20 (98 aa).

Belongs to the bacterial ribosomal protein bS20 family.

Binds directly to 16S ribosomal RNA. This Kosmotoga olearia (strain ATCC BAA-1733 / DSM 21960 / TBF 19.5.1) protein is Small ribosomal subunit protein bS20.